Reading from the N-terminus, the 197-residue chain is GTP cyclohydrolase-2 (197 aa).

49–53 (RVHSE) lines the GTP pocket. Residues C54, C65, and C67 each coordinate Zn(2+). Residues Q70, 92–94 (EGR), and T114 contribute to the GTP site. Catalysis depends on D126, which acts as the Proton acceptor. R128 functions as the Nucleophile in the catalytic mechanism. GTP-binding residues include T149 and K154.

It belongs to the GTP cyclohydrolase II family. In terms of assembly, homodimer. It depends on Zn(2+) as a cofactor.

The enzyme catalyses GTP + 4 H2O = 2,5-diamino-6-hydroxy-4-(5-phosphoribosylamino)-pyrimidine + formate + 2 phosphate + 3 H(+). It functions in the pathway cofactor biosynthesis; riboflavin biosynthesis; 5-amino-6-(D-ribitylamino)uracil from GTP: step 1/4. Its function is as follows. Catalyzes the conversion of GTP to 2,5-diamino-6-ribosylamino-4(3H)-pyrimidinone 5'-phosphate (DARP), formate and pyrophosphate. This is GTP cyclohydrolase-2 from Cronobacter sakazakii (strain ATCC BAA-894) (Enterobacter sakazakii).